The following is a 101-amino-acid chain: Urease subunit beta (101 aa).

It belongs to the urease beta subunit family. As to quaternary structure, heterotrimer of UreA (gamma), UreB (beta) and UreC (alpha) subunits. Three heterotrimers associate to form the active enzyme.

It is found in the cytoplasm. The catalysed reaction is urea + 2 H2O + H(+) = hydrogencarbonate + 2 NH4(+). Its pathway is nitrogen metabolism; urea degradation; CO(2) and NH(3) from urea (urease route): step 1/1. This Burkholderia pseudomallei (strain 668) protein is Urease subunit beta.